A 251-amino-acid chain; its full sequence is uncharacterized protein (251 aa).

This is an uncharacterized protein from Mycoplasma genitalium (strain ATCC 33530 / DSM 19775 / NCTC 10195 / G37) (Mycoplasmoides genitalium).